We begin with the raw amino-acid sequence, 368 residues long: E3 ubiquitin-protein ligase ATL31 (368 aa).

The first 23 residues, 1 to 23, serve as a signal peptide directing secretion; the sequence is MDPIKHISLPVLVLFLLLSVSAG. A helical membrane pass occupies residues 46–66; sequence AVVVVVVIAALFFMGFFTVYI. The RING-type; atypical zinc-finger motif lies at 124–166; the sequence is CAICLNEFEDDETLRLLPKCDHVFHPHCIGAWLQGHVTCPVCR. Phosphoserine is present on Ser-247. The disordered stretch occupies residues 342–368; that stretch reads NKDGEGTSSVQHIGTVGSTSGSLRLPV. The segment covering 347 to 368 has biased composition (polar residues); sequence GTSSVQHIGTVGSTSGSLRLPV.

Belongs to the RING-type zinc finger family. ATL subfamily.

Its subcellular location is the membrane. The enzyme catalyses S-ubiquitinyl-[E2 ubiquitin-conjugating enzyme]-L-cysteine + [acceptor protein]-L-lysine = [E2 ubiquitin-conjugating enzyme]-L-cysteine + N(6)-ubiquitinyl-[acceptor protein]-L-lysine.. Its pathway is protein modification; protein ubiquitination. E3 ubiquitin-protein ligase that is required for the plant C/N response during seedling growth transition. May be involved in the early steps of the plant defense signaling pathway. This Arabidopsis thaliana (Mouse-ear cress) protein is E3 ubiquitin-protein ligase ATL31 (ATL31).